Consider the following 581-residue polypeptide: Chaperonin GroEL 1 (581 aa).

ATP contacts are provided by residues 29–32 (TIGP), 86–90 (DGTTT), Gly-413, and Asp-492. The tract at residues 522-543 (PEPEPAAPGGPSGDPMGGMGGM) is disordered. Positions 531 to 543 (GPSGDPMGGMGGM) are enriched in gly residues.

Belongs to the chaperonin (HSP60) family. As to quaternary structure, forms a cylinder of 14 subunits composed of two heptameric rings stacked back-to-back. Interacts with the co-chaperonin GroES.

It is found in the cytoplasm. It carries out the reaction ATP + H2O + a folded polypeptide = ADP + phosphate + an unfolded polypeptide.. In terms of biological role, together with its co-chaperonin GroES, plays an essential role in assisting protein folding. The GroEL-GroES system forms a nano-cage that allows encapsulation of the non-native substrate proteins and provides a physical environment optimized to promote and accelerate protein folding. This chain is Chaperonin GroEL 1, found in Prochlorococcus marinus (strain MIT 9215).